Reading from the N-terminus, the 175-residue chain is Receptor activity-modifying protein 2 (175 aa).

An N-terminal signal peptide occupies residues 1–42 (MASLRVERAGGPRLPRTRVGRPAALRLLLLLGAVLNPHEALA). Topologically, residues 43–143 (QPLPTTGTPG…VQPTFSDPPE (101 aa)) are extracellular. Cystine bridges form between Cys-68–Cys-99 and Cys-84–Cys-131. A glycan (N-linked (GlcNAc...) asparagine) is linked at Asn-130. Residues 144–165 (DVLLAMIIAPICLIPFLITLVV) form a helical membrane-spanning segment. Over 166–175 (WRSKDSEAQA) the chain is Cytoplasmic.

This sequence belongs to the RAMP family. As to quaternary structure, heterodimer of CALCRL and RAMP2; the interaction forms the receptor complex for adrenomedullin/ADM. Heterodimer of CALCR and RAMP2; interaction forms the AMYR2 receptor complex for calcitonin/CALC and amylin/IAPP. Strongly expressed in lung, breast, immune system and fetal tissues.

The protein resides in the cell membrane. Functionally, accessory protein that interacts with and modulates the function of G-protein coupled receptors including calcitonin gene-related peptide type 1 receptor (CALCRL) and calcitonin receptor (CALCR). Required for the transport of CALCRL to the plasma membrane. Together with CALCRL, form a receptor complex for adrenomedullin/ADM. Together with CALCR, act as a receptor complex for calcitonin/CT/CALC. Together with CALCR, also act as a receptor complex for amylin/IAPP. This chain is Receptor activity-modifying protein 2, found in Homo sapiens (Human).